Here is a 456-residue protein sequence, read N- to C-terminus: MYQKNYHIYFVGIGGIGMSAIAELLLSLGYRVSGSDLKLSAITQRLASCGATIFNGHRADQVKDVDVLVTSTAISKNNPEVIEAAERSIRTIPRAEMLAELMRIKYAIAVSGAHGKTSTTAMIATILNQAGLDPTVVVGGLLKSIGTNAHHGKGDYIVAEADESDGSFLKYAPAIAAVTNIDLEHLDFYKDIEDIKDNFVKFINSVPFYGLAVLCLDNEHIQAILPRITARYTTFGLSAQADLAARGIRFEGRRGYFTVVHGKEVLGDITLNLSGKHNISNALAAIAVALELKVDFSVIKEALEQIEGVKRRLEIKGERNSITVVDDYGHHPTEVKTTLAAVREGWPDKRVVVVFQPHRYSRTKALFDEFTRAFYQSDLLFVLPIYAASEQPIDGIDSLKLCNGIQEHGHKNVICVKDFESCLSILSDTLEPGDLVLTLGAGDVYNLGETLLEILA.

112–118 (GAHGKTS) lines the ATP pocket.

This sequence belongs to the MurCDEF family.

The protein localises to the cytoplasm. The enzyme catalyses UDP-N-acetyl-alpha-D-muramate + L-alanine + ATP = UDP-N-acetyl-alpha-D-muramoyl-L-alanine + ADP + phosphate + H(+). Its pathway is cell wall biogenesis; peptidoglycan biosynthesis. In terms of biological role, cell wall formation. The protein is UDP-N-acetylmuramate--L-alanine ligase of Desulforapulum autotrophicum (strain ATCC 43914 / DSM 3382 / VKM B-1955 / HRM2) (Desulfobacterium autotrophicum).